Reading from the N-terminus, the 121-residue chain is Large ribosomal subunit protein uL24 (121 aa).

The protein belongs to the universal ribosomal protein uL24 family. Part of the 50S ribosomal subunit.

Its function is as follows. One of two assembly initiator proteins, it binds directly to the 5'-end of the 23S rRNA, where it nucleates assembly of the 50S subunit. Functionally, located at the polypeptide exit tunnel on the outside of the subunit. The sequence is that of Large ribosomal subunit protein uL24 from Thermococcus kodakarensis (strain ATCC BAA-918 / JCM 12380 / KOD1) (Pyrococcus kodakaraensis (strain KOD1)).